The following is a 353-amino-acid chain: Photosystem II protein D1 (353 aa).

Thr-2 carries the post-translational modification N-acetylthreonine. Thr-2 carries the phosphothreonine modification. Helical transmembrane passes span 29–46, 118–133, and 142–156; these read YIGWFGVLMIPTLLTATS, HFLLGVACYMGREWEL, and WIAVAYSAPVAAATA. His-118 lines the chlorophyll a pocket. Tyr-126 is a binding site for pheophytin a. Residues Asp-170 and Glu-189 each contribute to the [CaMn4O5] cluster site. Residues 197 to 218 traverse the membrane as a helical segment; that stretch reads FHMLGVAGVFGGSLFSAMHGSL. His-198 contacts chlorophyll a. Residues His-215 and 264 to 265 contribute to the a quinone site; that span reads SF. His-215 is a binding site for Fe cation. Fe cation is bound at residue His-272. Residues 274–288 form a helical membrane-spanning segment; the sequence is FLAAWPVVGIWFTAL. His-332, Glu-333, Asp-342, and Ala-344 together coordinate [CaMn4O5] cluster. Positions 345-353 are excised as a propeptide; the sequence is AVEAPSING.

The protein belongs to the reaction center PufL/M/PsbA/D family. PSII is composed of 1 copy each of membrane proteins PsbA, PsbB, PsbC, PsbD, PsbE, PsbF, PsbH, PsbI, PsbJ, PsbK, PsbL, PsbM, PsbT, PsbX, PsbY, PsbZ, Psb30/Ycf12, at least 3 peripheral proteins of the oxygen-evolving complex and a large number of cofactors. It forms dimeric complexes. The cofactor is The D1/D2 heterodimer binds P680, chlorophylls that are the primary electron donor of PSII, and subsequent electron acceptors. It shares a non-heme iron and each subunit binds pheophytin, quinone, additional chlorophylls, carotenoids and lipids. D1 provides most of the ligands for the Mn4-Ca-O5 cluster of the oxygen-evolving complex (OEC). There is also a Cl(-1) ion associated with D1 and D2, which is required for oxygen evolution. The PSII complex binds additional chlorophylls, carotenoids and specific lipids.. In terms of processing, tyr-161 forms a radical intermediate that is referred to as redox-active TyrZ, YZ or Y-Z. Post-translationally, C-terminally processed by CTPA; processing is essential to allow assembly of the oxygen-evolving complex and thus photosynthetic growth.

It is found in the plastid. Its subcellular location is the chloroplast thylakoid membrane. The enzyme catalyses 2 a plastoquinone + 4 hnu + 2 H2O = 2 a plastoquinol + O2. This is one of the two reaction center proteins of photosystem II. Functionally, photosystem II (PSII) is a light-driven water:plastoquinone oxidoreductase that uses light energy to abstract electrons from H(2)O, generating O(2) and a proton gradient subsequently used for ATP formation. It consists of a core antenna complex that captures photons, and an electron transfer chain that converts photonic excitation into a charge separation. The D1/D2 (PsbA/PsbD) reaction center heterodimer binds P680, the primary electron donor of PSII as well as several subsequent electron acceptors. In Pisum sativum (Garden pea), this protein is Photosystem II protein D1.